The following is a 147-amino-acid chain: Hemoglobin subunit epsilon (147 aa).

Residues 3-147 (HFTAEEKAAI…VAIALGHKYH (145 aa)) form the Globin domain. Phosphoserine occurs at positions 14 and 51. Residues histidine 64 and histidine 93 each coordinate heme b.

This sequence belongs to the globin family. Heterotetramer of two alpha chains and two epsilon chains in early embryonic hemoglobin Gower-2; two zeta chains and two epsilon chains in early embryonic hemoglobin Gower-1. As to expression, red blood cells.

In terms of biological role, the epsilon chain is a beta-type chain of early mammalian embryonic hemoglobin. The polypeptide is Hemoglobin subunit epsilon (HBE1) (Saimiri boliviensis boliviensis (Bolivian squirrel monkey)).